We begin with the raw amino-acid sequence, 176 residues long: Endoribonuclease YbeY (176 aa).

Zn(2+)-binding residues include H128, H132, and H138.

It belongs to the endoribonuclease YbeY family. The cofactor is Zn(2+).

Its subcellular location is the cytoplasm. Its function is as follows. Single strand-specific metallo-endoribonuclease involved in late-stage 70S ribosome quality control and in maturation of the 3' terminus of the 16S rRNA. This chain is Endoribonuclease YbeY, found in Zymomonas mobilis subsp. mobilis (strain ATCC 31821 / ZM4 / CP4).